The following is a 433-amino-acid chain: ATP-dependent protease ATPase subunit HslU (433 aa).

Residues valine 18, 60 to 65 (GVGKTE), aspartate 246, glutamate 311, and arginine 383 contribute to the ATP site.

Belongs to the ClpX chaperone family. HslU subfamily. In terms of assembly, a double ring-shaped homohexamer of HslV is capped on each side by a ring-shaped HslU homohexamer. The assembly of the HslU/HslV complex is dependent on binding of ATP.

Its subcellular location is the cytoplasm. In terms of biological role, ATPase subunit of a proteasome-like degradation complex; this subunit has chaperone activity. The binding of ATP and its subsequent hydrolysis by HslU are essential for unfolding of protein substrates subsequently hydrolyzed by HslV. HslU recognizes the N-terminal part of its protein substrates and unfolds these before they are guided to HslV for hydrolysis. This Nitrobacter hamburgensis (strain DSM 10229 / NCIMB 13809 / X14) protein is ATP-dependent protease ATPase subunit HslU.